Reading from the N-terminus, the 188-residue chain is Ribose 1,5-bisphosphate phosphokinase PhnN (188 aa).

9-16 (GPSGAGKD) provides a ligand contact to ATP.

This sequence belongs to the ribose 1,5-bisphosphokinase family.

It carries out the reaction alpha-D-ribose 1,5-bisphosphate + ATP = 5-phospho-alpha-D-ribose 1-diphosphate + ADP. It functions in the pathway metabolic intermediate biosynthesis; 5-phospho-alpha-D-ribose 1-diphosphate biosynthesis; 5-phospho-alpha-D-ribose 1-diphosphate from D-ribose 5-phosphate (route II): step 3/3. In terms of biological role, catalyzes the phosphorylation of ribose 1,5-bisphosphate to 5-phospho-D-ribosyl alpha-1-diphosphate (PRPP). This Pectobacterium parmentieri (strain WPP163) (Pectobacterium wasabiae (strain WPP163)) protein is Ribose 1,5-bisphosphate phosphokinase PhnN.